A 492-amino-acid chain; its full sequence is MTNTLTSTFADLGLSEKRCQLLADIGFEAPTQIQTEAIPLLLSGRDMLAQSQTGTGKTAAFALPLMDRIDPEGDLQALILTPTRELAQQVAEAMKDFSHERRLFILNVYGGQSIERQIRSLERGVQIVVGTPGRVIDLIDRKKLKLETIQWVVLDEADEMLSMGFIDDVKTILRKTPPTRQTACFSATMPREIKELVNQFLNDPALVTVKQTQSTPTRIEQQLYHVPRGWSKAKALQPILEMEDPESAIIFVRTKQTAADLTSRLQEAGHSVDEYHGNLSQSQRERLVHRFRDGKIKLVVATDIAARGLDVNNLSHVVNFDLPDNAETYIHRIGRTGRAGKTGKAIALVEPIDRRLLRSIENRLKQQIEVCTIPNRSQVEAKRIEKLQEQLKEALTGERMASFLPLVRELSDEYDAQAIAAAALQMIYDQSCPHWMKSDWEVPEVDFNKPVLRRGRNAGGGQNKSGGGYQGKPGKPRRSSGGRRPAYSDRQQ.

Positions 7 to 35 match the Q motif motif; sequence STFADLGLSEKRCQLLADIGFEAPTQIQT. One can recognise a Helicase ATP-binding domain in the interval 38–207; the sequence is IPLLLSGRDM…NQFLNDPALV (170 aa). 51–58 contacts ATP; it reads SQTGTGKT. A DEAD box motif is present at residues 155–158; that stretch reads DEAD. The Helicase C-terminal domain maps to 234–379; it reads KALQPILEME…VCTIPNRSQV (146 aa). Residues 451 to 492 form a disordered region; the sequence is VLRRGRNAGGGQNKSGGGYQGKPGKPRRSSGGRRPAYSDRQQ. Over residues 457–471 the composition is skewed to gly residues; the sequence is NAGGGQNKSGGGYQG.

Belongs to the DEAD box helicase family.

Its subcellular location is the cytoplasm. It is found in the cell inner membrane. It localises to the cellular thylakoid membrane. The catalysed reaction is ATP + H2O = ADP + phosphate + H(+). Its activity is regulated as follows. Helicase inhibited by the slowly-hydrolyzing ATP analog ATP-gamma-S. Protein is rapidly degraded upon shifting from 20 to 30 degrees Celsius, the degradation machinery is only transiently present in cells grown at 30 degrees Celsius, is inhibited by commercial protease inhibitors and requires full-length protein expression (the N-terminal fragment does not induce proteolysis although it can be degraded by wild-type extract). Functionally, an ATP-dependent bidirectional RNA helicase with RNA-dependent ATPase activity; does not unwind dsDNA, uses only (d)ATP. Also has ATP-dependent RNA annealing activity; concurrent annealing and helicase activity promote strand-exchange activity. In vitro has low helicase processivity, annealing processivity is probably higher. Required for correct cold adaptation, probably by aiding translation of mRNAs required for photosynthesis and electron transport. Probably regulates the cold-shock-inducible expression of the GroESL chaperones. May partially regulate its own expression at both the transcriptional and post-transcriptional level (experiments used a construct expressing a 25 kDa trunacted protein which might have dominant-negative effects); is probably not directly involved in the pathway responsible for mRNA degradation. The chain is RNA helicase CrhR from Synechocystis sp. (strain ATCC 27184 / PCC 6803 / Kazusa).